A 178-amino-acid polypeptide reads, in one-letter code: ATP synthase subunit delta (178 aa).

This sequence belongs to the ATPase delta chain family. F-type ATPases have 2 components, F(1) - the catalytic core - and F(0) - the membrane proton channel. F(1) has five subunits: alpha(3), beta(3), gamma(1), delta(1), epsilon(1). F(0) has three main subunits: a(1), b(2) and c(10-14). The alpha and beta chains form an alternating ring which encloses part of the gamma chain. F(1) is attached to F(0) by a central stalk formed by the gamma and epsilon chains, while a peripheral stalk is formed by the delta and b chains.

Its subcellular location is the cell membrane. In terms of biological role, f(1)F(0) ATP synthase produces ATP from ADP in the presence of a proton or sodium gradient. F-type ATPases consist of two structural domains, F(1) containing the extramembraneous catalytic core and F(0) containing the membrane proton channel, linked together by a central stalk and a peripheral stalk. During catalysis, ATP synthesis in the catalytic domain of F(1) is coupled via a rotary mechanism of the central stalk subunits to proton translocation. This protein is part of the stalk that links CF(0) to CF(1). It either transmits conformational changes from CF(0) to CF(1) or is implicated in proton conduction. In Streptococcus pyogenes serotype M1, this protein is ATP synthase subunit delta.